A 274-amino-acid chain; its full sequence is Energy-coupling factor transporter ATP-binding protein EcfA1 (274 aa).

One can recognise an ABC transporter domain in the interval I11–D245. ATP is bound at residue G45 to S52.

This sequence belongs to the ABC transporter superfamily. Energy-coupling factor EcfA family. As to quaternary structure, forms a stable energy-coupling factor (ECF) transporter complex composed of 2 membrane-embedded substrate-binding proteins (S component), 2 ATP-binding proteins (A component) and 2 transmembrane proteins (T component).

It is found in the cell membrane. ATP-binding (A) component of a common energy-coupling factor (ECF) ABC-transporter complex. Unlike classic ABC transporters this ECF transporter provides the energy necessary to transport a number of different substrates. The chain is Energy-coupling factor transporter ATP-binding protein EcfA1 from Mycoplasma mobile (strain ATCC 43663 / 163K / NCTC 11711) (Mesomycoplasma mobile).